We begin with the raw amino-acid sequence, 432 residues long: Adenylosuccinate synthetase (432 aa).

Residues 13–19 (GDEGKGK) and 41–43 (GHT) contribute to the GTP site. Catalysis depends on D14, which acts as the Proton acceptor. Mg(2+) is bound by residues D14 and G41. IMP-binding positions include 14-17 (DEGK), 39-42 (NAGH), T130, R144, Q225, T240, and R304. The active-site Proton donor is the H42. 300 to 306 (ATTGRRR) serves as a coordination point for substrate. Residues R306, 332 to 334 (KLD), and 415 to 417 (STG) each bind GTP.

Belongs to the adenylosuccinate synthetase family. Homodimer. Mg(2+) serves as cofactor.

Its subcellular location is the cytoplasm. It carries out the reaction IMP + L-aspartate + GTP = N(6)-(1,2-dicarboxyethyl)-AMP + GDP + phosphate + 2 H(+). Its pathway is purine metabolism; AMP biosynthesis via de novo pathway; AMP from IMP: step 1/2. Its function is as follows. Plays an important role in the de novo pathway of purine nucleotide biosynthesis. Catalyzes the first committed step in the biosynthesis of AMP from IMP. This chain is Adenylosuccinate synthetase, found in Salmonella arizonae (strain ATCC BAA-731 / CDC346-86 / RSK2980).